The following is a 326-amino-acid chain: tRNA-modifying protein YgfZ (326 aa).

Residues Trp-27 and Trp-189 each contribute to the folate site.

It belongs to the tRNA-modifying YgfZ family.

It is found in the cytoplasm. Its function is as follows. Folate-binding protein involved in regulating the level of ATP-DnaA and in the modification of some tRNAs. It is probably a key factor in regulatory networks that act via tRNA modification, such as initiation of chromosomal replication. The sequence is that of tRNA-modifying protein YgfZ from Salmonella schwarzengrund (strain CVM19633).